Consider the following 245-residue polypeptide: 1-(5-phosphoribosyl)-5-[(5-phosphoribosylamino)methylideneamino] imidazole-4-carboxamide isomerase (245 aa).

The active-site Proton acceptor is D11. The active-site Proton donor is D132.

It belongs to the HisA/HisF family.

The protein localises to the cytoplasm. The enzyme catalyses 1-(5-phospho-beta-D-ribosyl)-5-[(5-phospho-beta-D-ribosylamino)methylideneamino]imidazole-4-carboxamide = 5-[(5-phospho-1-deoxy-D-ribulos-1-ylimino)methylamino]-1-(5-phospho-beta-D-ribosyl)imidazole-4-carboxamide. The protein operates within amino-acid biosynthesis; L-histidine biosynthesis; L-histidine from 5-phospho-alpha-D-ribose 1-diphosphate: step 4/9. The polypeptide is 1-(5-phosphoribosyl)-5-[(5-phosphoribosylamino)methylideneamino] imidazole-4-carboxamide isomerase (Bacillus velezensis (strain DSM 23117 / BGSC 10A6 / LMG 26770 / FZB42) (Bacillus amyloliquefaciens subsp. plantarum)).